The following is a 162-amino-acid chain: Nucleotide-binding protein SGR_2909 (162 aa).

It belongs to the YajQ family.

Functionally, nucleotide-binding protein. This chain is Nucleotide-binding protein SGR_2909, found in Streptomyces griseus subsp. griseus (strain JCM 4626 / CBS 651.72 / NBRC 13350 / KCC S-0626 / ISP 5235).